The chain runs to 260 residues: Acetylglutamate kinase (260 aa).

Residues 46-47 (GG), arginine 68, and asparagine 160 each bind substrate.

Belongs to the acetylglutamate kinase family. ArgB subfamily.

Its subcellular location is the cytoplasm. It carries out the reaction N-acetyl-L-glutamate + ATP = N-acetyl-L-glutamyl 5-phosphate + ADP. The protein operates within amino-acid biosynthesis; L-arginine biosynthesis; N(2)-acetyl-L-ornithine from L-glutamate: step 2/4. In terms of biological role, catalyzes the ATP-dependent phosphorylation of N-acetyl-L-glutamate. This is Acetylglutamate kinase from Shewanella sp. (strain MR-4).